Here is a 333-residue protein sequence, read N- to C-terminus: DNA-directed RNA polymerase subunit alpha (333 aa).

An alpha N-terminal domain (alpha-NTD) region spans residues Met-1–Lys-234. The alpha C-terminal domain (alpha-CTD) stretch occupies residues Ile-248–Ala-333.

This sequence belongs to the RNA polymerase alpha chain family. Homodimer. The RNAP catalytic core consists of 2 alpha, 1 beta, 1 beta' and 1 omega subunit. When a sigma factor is associated with the core the holoenzyme is formed, which can initiate transcription.

The enzyme catalyses RNA(n) + a ribonucleoside 5'-triphosphate = RNA(n+1) + diphosphate. In terms of biological role, DNA-dependent RNA polymerase catalyzes the transcription of DNA into RNA using the four ribonucleoside triphosphates as substrates. The chain is DNA-directed RNA polymerase subunit alpha from Stutzerimonas stutzeri (strain A1501) (Pseudomonas stutzeri).